A 188-amino-acid polypeptide reads, in one-letter code: HGPRTase-like protein (188 aa).

This sequence belongs to the purine/pyrimidine phosphoribosyltransferase family. Archaeal HPRT subfamily.

Its function is as follows. May catalyze a purine salvage reaction, the substrate is unknown. The chain is HGPRTase-like protein from Halobacterium salinarum (strain ATCC 29341 / DSM 671 / R1).